Consider the following 118-residue polypeptide: UPF0342 protein LCK_01004 (118 aa).

It belongs to the UPF0342 family.

This chain is UPF0342 protein LCK_01004, found in Leuconostoc citreum (strain KM20).